The chain runs to 181 residues: MSFVPTKVFFTKGVGRHKEYLSSFELALRDAKIEKCNLVTVSSIFPPKCERISVEEGLKHLKPGQITFAVMARNSTNENNRLISASVGVALPADESQYGYLSEHHPYGETAEQSGEYAEDLAATMLATTLGIEFDPNKDWDEREGIYKMSGKIVNSFNITESAEGETGMWTTVISCAVLLP.

Ser-43 is subject to Pyruvic acid (Ser).

The protein belongs to the PdaD family. The cofactor is pyruvate.

The catalysed reaction is L-arginine + H(+) = agmatine + CO2. The sequence is that of Probable pyruvoyl-dependent arginine decarboxylase from Chlorobaculum tepidum (strain ATCC 49652 / DSM 12025 / NBRC 103806 / TLS) (Chlorobium tepidum).